We begin with the raw amino-acid sequence, 140 residues long: Large ribosomal subunit protein uL16 (140 aa).

It belongs to the universal ribosomal protein uL16 family. As to quaternary structure, part of the 50S ribosomal subunit.

In terms of biological role, binds 23S rRNA and is also seen to make contacts with the A and possibly P site tRNAs. The chain is Large ribosomal subunit protein uL16 from Phytoplasma australiense.